The chain runs to 938 residues: Isoleucine--tRNA ligase (938 aa).

The short motif at P58–H68 is the 'HIGH' region element. At K183 the chain carries N6-acetyllysine. E561 provides a ligand contact to L-isoleucyl-5'-AMP. A 'KMSKS' region motif is present at residues K602–S606. K605 serves as a coordination point for ATP. Zn(2+)-binding residues include C901, C904, C921, and C924.

The protein belongs to the class-I aminoacyl-tRNA synthetase family. IleS type 1 subfamily. Monomer. The cofactor is Zn(2+).

It localises to the cytoplasm. It catalyses the reaction tRNA(Ile) + L-isoleucine + ATP = L-isoleucyl-tRNA(Ile) + AMP + diphosphate. In terms of biological role, catalyzes the attachment of isoleucine to tRNA(Ile). As IleRS can inadvertently accommodate and process structurally similar amino acids such as valine, to avoid such errors it has two additional distinct tRNA(Ile)-dependent editing activities. One activity is designated as 'pretransfer' editing and involves the hydrolysis of activated Val-AMP. The other activity is designated 'posttransfer' editing and involves deacylation of mischarged Val-tRNA(Ile). The chain is Isoleucine--tRNA ligase from Escherichia coli O9:H4 (strain HS).